Here is a 478-residue protein sequence, read N- to C-terminus: MLHLSDFSGSDALLSKPTEGCAHASPELPRLPARDAPSAAAYPGGDFLSWALSSCGAGGDLTDSCFLEGPAPTPPSGLSYSGSFFIQAVPEHPHDPEALFNLMSGILGLAPFPGPEAAASRSPLDVPFPAGPDALLPDLYSPDLSSAAFPEAFWEAAPSAGAPSQCLFEPQLSPPDVKPGLRAPPASPALDAAASAFKGPYAPWELLSAGVPGNCGSQGSFQTTPEARFSAVGTKVEDLLSISCPAELPGPAARLYQAGAYDTFSLAPGDLGEGTEGLPALLTPPGGEGGSGGEGGEFLAAPPAQLSPLGLRGAATADFSKPLVADLPGGSGVAAPSSPAASFPAAKARRKGRRGGKCSARCFCPRPHVKAFACPVESCVRSFARSDELNRHLRIHTGHKPFQCRICLRNFSRSDHLTTHVRTHTGEKPFACDVCGRRFARSDEKKRHSKVHLKQKARAEERLKGLGFYSLGLSFAAL.

Residues 275–302 (TEGLPALLTPPGGEGGSGGEGGEFLAAP) are disordered. The span at 286–296 (GGEGGSGGEGG) shows a compositional bias: gly residues. C2H2-type zinc fingers lie at residues 372–396 (FACP…LRIH), 402–424 (FQCR…VRTH), and 430–452 (FACD…SKVH).

Belongs to the EGR C2H2-type zinc-finger protein family.

Its subcellular location is the nucleus. Transcriptional regulator. Recognizes and binds to the DNA sequence 5'-GCGGGGGCG-3' (GSG). Activates the transcription of target genes whose products are required for mitogenesis and differentiation. This Mus musculus (Mouse) protein is Early growth response protein 4 (Egr4).